The following is a 1039-amino-acid chain: Error-prone DNA polymerase (1039 aa).

This sequence belongs to the DNA polymerase type-C family. DnaE2 subfamily.

Its subcellular location is the cytoplasm. It carries out the reaction DNA(n) + a 2'-deoxyribonucleoside 5'-triphosphate = DNA(n+1) + diphosphate. DNA polymerase involved in damage-induced mutagenesis and translesion synthesis (TLS). It is not the major replicative DNA polymerase. The protein is Error-prone DNA polymerase of Idiomarina loihiensis (strain ATCC BAA-735 / DSM 15497 / L2-TR).